Consider the following 145-residue polypeptide: Ribosomal RNA large subunit methyltransferase H (145 aa).

S-adenosyl-L-methionine contacts are provided by residues leucine 64, glycine 93, and 112–117 (LSPLTF).

It belongs to the RNA methyltransferase RlmH family. As to quaternary structure, homodimer.

The protein resides in the cytoplasm. It carries out the reaction pseudouridine(1915) in 23S rRNA + S-adenosyl-L-methionine = N(3)-methylpseudouridine(1915) in 23S rRNA + S-adenosyl-L-homocysteine + H(+). Functionally, specifically methylates the pseudouridine at position 1915 (m3Psi1915) in 23S rRNA. This Prochlorococcus marinus (strain MIT 9211) protein is Ribosomal RNA large subunit methyltransferase H.